The sequence spans 487 residues: Glucose starvation modulator protein 1 (487 aa).

A disordered region spans residues 1 to 75 (MSIRFPEIPG…KRLTPQEKKA (75 aa)). Residues 59-68 (SFSSSMTKRL) show a composition bias toward polar residues. The zn(2)-C6 fungal-type DNA-binding region spans 83-111 (CVFCHSKHLQCSHSRPCQNCIKRNLAHEC). The span at 122–139 (MSTTEVPAVSGESSSESG) shows a compositional bias: polar residues. Residues 122–158 (MSTTEVPAVSGESSSESGRATGENGSEMGNPPDPQIA) form a disordered region. A PAS domain is found at 348–420 (CLLDYENLSR…FRLFESVAVG (73 aa)).

The protein belongs to the ERT1/acuK family.

Its subcellular location is the nucleus. Transcription factor which regulates nonfermentable carbon utilization. The polypeptide is Glucose starvation modulator protein 1 (GSM1) (Clavispora lusitaniae (strain ATCC 42720) (Yeast)).